The sequence spans 218 residues: Ras-related protein Rab-11B (218 aa).

Gly-2 is modified (N-acetylglycine). Citrulline is present on Arg-4. Residues Ser-20, Gly-21, Gly-23, Lys-24, Ser-25, Asn-26, Asn-37, Leu-38, Ser-40, Ser-42, and Thr-43 each contribute to the GTP site. Residue Ser-25 participates in Mg(2+) binding. A Switch 1 motif is present at residues 36 to 47 (FNLESKSTIGVE). Residues Thr-43 and Asp-66 each coordinate Mg(2+). Residues 67 to 86 (TAGQERYRAITSAYYRGAVG) carry the Switch 2 motif. 6 residues coordinate GTP: Gly-69, Asn-124, Lys-125, Asp-127, Ala-155, and Leu-156. Positions 184 to 218 (RAAHDESPGNNVVDISVPPTTDGQKPNKLQCCQNL) are disordered. S-geranylgeranyl cysteine attachment occurs at residues Cys-214 and Cys-215. The residue at position 215 (Cys-215) is a Cysteine methyl ester. The propeptide at 216 to 218 (QNL) is removed in mature form.

The protein belongs to the small GTPase superfamily. Rab family. In terms of assembly, interacts with KCNMA1. Interacts with RAB11FIP1, RAB11FIP2, RAB11FIP3 and RAB11FIP4. May interact with TBC1D14. Interacts with ATP6V1E1. Interacts with PI4KB. Interacts (GDP-bound form) with ZFYVE27. Interacts (GDP-bound form) with KIF5A in a ZFYVE27-dependent manner. Interacts with RELCH. Interacts (in GTP-bound form) with TBC1D8B (via domain Rab-GAP TBC). Forms a complex containing RAB11B, ASAP1, Rabin8/RAB3IP, RAP11FIP3 and ARF4. Interacts with WDR44. Mg(2+) serves as cofactor. Post-translationally, citrullinated by PADI4. In terms of processing, (Microbial infection) Glycosylated on arginine residues by S.typhimurium protein Ssek3.

Its subcellular location is the recycling endosome membrane. It is found in the cytoplasmic vesicle. The protein resides in the secretory vesicle. It localises to the synaptic vesicle membrane. The protein localises to the phagosome membrane. It catalyses the reaction GTP + H2O = GDP + phosphate + H(+). With respect to regulation, regulated by guanine nucleotide exchange factors (GEFs) which promote the exchange of bound GDP for free GTP. Regulated by GTPase activating proteins (GAPs) which increase the GTP hydrolysis activity. Inhibited by GDP dissociation inhibitors (GDIs) which prevent Rab-GDP dissociation. The small GTPases Rab are key regulators of intracellular membrane trafficking, from the formation of transport vesicles to their fusion with membranes. Rabs cycle between an inactive GDP-bound form and an active GTP-bound form that is able to recruit to membranes different set of downstream effectors directly responsible for vesicle formation, movement, tethering and fusion. The small Rab GTPase RAB11B plays a role in endocytic recycling, regulating apical recycling of several transmembrane proteins including cystic fibrosis transmembrane conductance regulator/CFTR, epithelial sodium channel/ENaC, potassium voltage-gated channel, and voltage-dependent L-type calcium channel. May also regulate constitutive and regulated secretion, like insulin granule exocytosis. Required for melanosome transport and release from melanocytes. Also regulates V-ATPase intracellular transport in response to extracellular acidosis. Promotes Rabin8/RAB3IP preciliary vesicular trafficking to mother centriole by forming a ciliary targeting complex containing Rab11, ASAP1, Rabin8/RAB3IP, RAB11FIP3 and ARF4, thereby regulating ciliogenesis initiation. On the contrary, upon LPAR1 receptor signaling pathway activation, interaction with phosphorylated WDR44 prevents Rab11-RAB3IP-RAB11FIP3 complex formation and cilia growth. The sequence is that of Ras-related protein Rab-11B from Homo sapiens (Human).